The chain runs to 101 residues: Small ribosomal subunit protein uS14 (101 aa).

Belongs to the universal ribosomal protein uS14 family. Part of the 30S ribosomal subunit. Contacts proteins S3 and S10.

In terms of biological role, binds 16S rRNA, required for the assembly of 30S particles and may also be responsible for determining the conformation of the 16S rRNA at the A site. In Methylobacterium sp. (strain 4-46), this protein is Small ribosomal subunit protein uS14.